Here is a 102-residue protein sequence, read N- to C-terminus: NADH-quinone oxidoreductase subunit K (102 aa).

3 helical membrane-spanning segments follow: residues 5-25 (LAHY…GIFL), 31-51 (IILL…FVAF), and 62-82 (VFVF…LAIL).

This sequence belongs to the complex I subunit 4L family. NDH-1 is composed of 14 different subunits. Subunits NuoA, H, J, K, L, M, N constitute the membrane sector of the complex.

It is found in the cell inner membrane. The catalysed reaction is a quinone + NADH + 5 H(+)(in) = a quinol + NAD(+) + 4 H(+)(out). NDH-1 shuttles electrons from NADH, via FMN and iron-sulfur (Fe-S) centers, to quinones in the respiratory chain. The immediate electron acceptor for the enzyme in this species is believed to be ubiquinone. Couples the redox reaction to proton translocation (for every two electrons transferred, four hydrogen ions are translocated across the cytoplasmic membrane), and thus conserves the redox energy in a proton gradient. In Bordetella petrii (strain ATCC BAA-461 / DSM 12804 / CCUG 43448), this protein is NADH-quinone oxidoreductase subunit K.